The sequence spans 151 residues: Flavodoxin YqcA (151 aa).

The Flavodoxin-like domain maps to 4–145 (IGIFVGTVYG…ISCPWVEAWA (142 aa)). Residues 10–15 (TVYGNA) and 99–101 (NFC) each bind FMN.

It belongs to the flavodoxin family. MioC subfamily. In terms of assembly, monomer. FMN serves as cofactor.

Its function is as follows. Probable electron transporter. The protein is Flavodoxin YqcA of Pectobacterium carotovorum subsp. carotovorum (Erwinia carotovora subsp. carotovora).